The primary structure comprises 381 residues: L-lactate dehydrogenase (381 aa).

Residues Met-1 to Gly-380 form the FMN hydroxy acid dehydrogenase domain. Tyr-24 lines the substrate pocket. The FMN site is built by Ser-106 and Gln-127. Position 129 (Tyr-129) interacts with substrate. Thr-155 is an FMN binding site. Arg-164 is a substrate binding site. Lys-251 contacts FMN. The active-site Proton acceptor is the His-275. Residue Arg-278 coordinates substrate. Asp-306–Arg-330 lines the FMN pocket.

The protein belongs to the FMN-dependent alpha-hydroxy acid dehydrogenase family. In terms of assembly, homotetramer. Requires FMN as cofactor.

It localises to the cell inner membrane. The enzyme catalyses (S)-lactate + A = pyruvate + AH2. In terms of biological role, catalyzes the conversion of L-lactate to pyruvate. Is coupled to the respiratory chain. This Pseudomonas aeruginosa (strain UCBPP-PA14) protein is L-lactate dehydrogenase.